The primary structure comprises 326 residues: Ribose operon repressor (326 aa).

In terms of domain architecture, HTH lacI-type spans 1 to 56 (MATIKDVAGAAGVSVATVSRNLNDNGYVHEETRTRVIAAMAKLNYYPNEVARSLYK). Positions 4–23 (IKDVAGAAGVSVATVSRNLN) form a DNA-binding region, H-T-H motif.

In terms of biological role, transcriptional repressor for the ribose rbsDACBK operon. The protein is Ribose operon repressor (rbsR) of Bacillus subtilis (strain 168).